A 168-amino-acid polypeptide reads, in one-letter code: Phosphopantetheine adenylyltransferase (168 aa).

Residue Thr-10 coordinates substrate. ATP-binding positions include 10–11 and His-18; that span reads TF. Substrate is bound by residues Lys-42, Leu-74, and Arg-88. ATP-binding positions include 89 to 91, Glu-99, and 124 to 130; these read GLR and NSFISST.

It belongs to the bacterial CoaD family. In terms of assembly, homohexamer. The cofactor is Mg(2+).

The protein resides in the cytoplasm. It catalyses the reaction (R)-4'-phosphopantetheine + ATP + H(+) = 3'-dephospho-CoA + diphosphate. It participates in cofactor biosynthesis; coenzyme A biosynthesis; CoA from (R)-pantothenate: step 4/5. Functionally, reversibly transfers an adenylyl group from ATP to 4'-phosphopantetheine, yielding dephospho-CoA (dPCoA) and pyrophosphate. This is Phosphopantetheine adenylyltransferase from Shewanella denitrificans (strain OS217 / ATCC BAA-1090 / DSM 15013).